A 206-amino-acid chain; its full sequence is Large ribosomal subunit protein uL4 (206 aa).

This sequence belongs to the universal ribosomal protein uL4 family. As to quaternary structure, part of the 50S ribosomal subunit.

One of the primary rRNA binding proteins, this protein initially binds near the 5'-end of the 23S rRNA. It is important during the early stages of 50S assembly. It makes multiple contacts with different domains of the 23S rRNA in the assembled 50S subunit and ribosome. Its function is as follows. Forms part of the polypeptide exit tunnel. This chain is Large ribosomal subunit protein uL4, found in Jannaschia sp. (strain CCS1).